A 455-amino-acid polypeptide reads, in one-letter code: GTPase Der (455 aa).

EngA-type G domains are found at residues proline 4 to aspartate 169 and isoleucine 178 to arginine 353. GTP contacts are provided by residues glycine 10–serine 17, aspartate 57–leucine 61, asparagine 120–glutamate 123, glycine 184–serine 191, aspartate 231–isoleucine 235, and asparagine 296–aspartate 299. Residues arginine 354–glutamine 439 enclose the KH-like domain.

This sequence belongs to the TRAFAC class TrmE-Era-EngA-EngB-Septin-like GTPase superfamily. EngA (Der) GTPase family. Associates with the 50S ribosomal subunit.

GTPase that plays an essential role in the late steps of ribosome biogenesis. This Synechococcus sp. (strain CC9902) protein is GTPase Der.